A 65-amino-acid chain; its full sequence is MAEVRLQEGEPLENALRRFKRKVQQEDIIKEVKRHSFYLKPGEKRRVKEALARKRNRKKARKEQD.

This sequence belongs to the bacterial ribosomal protein bS21 family.

The protein is Small ribosomal subunit protein bS21 of Acidobacterium capsulatum (strain ATCC 51196 / DSM 11244 / BCRC 80197 / JCM 7670 / NBRC 15755 / NCIMB 13165 / 161).